A 716-amino-acid chain; its full sequence is Delta-1-pyrroline-5-carboxylate synthase 1 (716 aa).

Positions 1–296 (MASVDPSRSF…WESSKDVSTR (296 aa)) are glutamate 5-kinase. Ser-60, Asp-157, and Asn-176 together coordinate substrate. ATP-binding positions include 196–197 (SD), 202–207 (YSGPPS), and 236–242 (RGGMTAK). A gamma-glutamyl phosphate reductase region spans residues 297–716 (EMAVAARDCS…VYTHKSLPLQ (420 aa)).

The protein in the N-terminal section; belongs to the glutamate 5-kinase family. It in the C-terminal section; belongs to the gamma-glutamyl phosphate reductase family. Expressed at high levels in leaves.

The enzyme catalyses L-glutamate + ATP = L-glutamyl 5-phosphate + ADP. The catalysed reaction is L-glutamate 5-semialdehyde + phosphate + NADP(+) = L-glutamyl 5-phosphate + NADPH + H(+). Its pathway is amino-acid biosynthesis; L-proline biosynthesis; L-glutamate 5-semialdehyde from L-glutamate: step 1/2. The protein operates within amino-acid biosynthesis; L-proline biosynthesis; L-glutamate 5-semialdehyde from L-glutamate: step 2/2. Feedback regulated by proline. In terms of biological role, P5CS plays a key role in proline biosynthesis, leading to osmoregulation in plants. Involved in abiotic stress tolerance. The sequence is that of Delta-1-pyrroline-5-carboxylate synthase 1 from Oryza sativa subsp. japonica (Rice).